Reading from the N-terminus, the 340-residue chain is Nuclear hormone receptor family member nhr-268 (340 aa).

A DNA-binding region (nuclear receptor) is located at residues M1–D75. NR C4-type zinc fingers lie at residues C3 to C23 and C39 to C58. In terms of domain architecture, NR LBD spans K98–H337.

Belongs to the nuclear hormone receptor family.

It localises to the nucleus. Orphan nuclear receptor. This chain is Nuclear hormone receptor family member nhr-268 (nhr-268), found in Caenorhabditis elegans.